Reading from the N-terminus, the 368-residue chain is UPF0284 protein PCC8801_3324 (368 aa).

This sequence belongs to the UPF0284 family.

The protein is UPF0284 protein PCC8801_3324 of Rippkaea orientalis (strain PCC 8801 / RF-1) (Cyanothece sp. (strain PCC 8801)).